A 280-amino-acid chain; its full sequence is Hydroxyethylthiazole kinase (280 aa).

M50 contributes to the substrate binding site. ATP-binding residues include K125 and T178. Substrate is bound at residue G205.

Belongs to the Thz kinase family. Mg(2+) is required as a cofactor.

It catalyses the reaction 5-(2-hydroxyethyl)-4-methylthiazole + ATP = 4-methyl-5-(2-phosphooxyethyl)-thiazole + ADP + H(+). Its pathway is cofactor biosynthesis; thiamine diphosphate biosynthesis; 4-methyl-5-(2-phosphoethyl)-thiazole from 5-(2-hydroxyethyl)-4-methylthiazole: step 1/1. In terms of biological role, catalyzes the phosphorylation of the hydroxyl group of 4-methyl-5-beta-hydroxyethylthiazole (THZ). This chain is Hydroxyethylthiazole kinase, found in Lacticaseibacillus casei (strain BL23) (Lactobacillus casei).